The chain runs to 488 residues: Germacrene A hydroxylase (488 aa).

Over 1–6 (MELSLT) the chain is Cytoplasmic. Residues 7–23 (TSIALATIVLILYKLAT) traverse the membrane as a helical; Signal-anchor for type II membrane protein segment. Over 24-488 (RPKSNKKRLP…KTELILVPSF (465 aa)) the chain is Lumenal. N-linked (GlcNAc...) asparagine glycans are attached at residues N260 and N379. Residue C432 coordinates heme.

Belongs to the cytochrome P450 family. It depends on heme as a cofactor.

Its subcellular location is the endoplasmic reticulum membrane. The protein localises to the microsome membrane. It carries out the reaction (+)-(R)-germacrene A + 3 reduced [NADPH--hemoprotein reductase] + 3 O2 = germacra-1(10),4,11(13)-trien-12-oate + 3 oxidized [NADPH--hemoprotein reductase] + 4 H2O + 4 H(+). It functions in the pathway secondary metabolite biosynthesis; terpenoid biosynthesis. With respect to regulation, inhibited by cytochrome C, miconazole, aminobenzotriazole, metyrapone and clotrimazole. Involved in the biosynthesis of germacrene-derived sesquiterpene lactones. Catalyzes three consecutive oxidations of germacrene A to produce germacrene A acid. Could also catalyze the three-step oxidation of non-natural substrate amorphadiene to artemisinic acid. Can use beta-elemene as substrate. This chain is Germacrene A hydroxylase, found in Cichorium intybus (Chicory).